A 107-amino-acid polypeptide reads, in one-letter code: uncharacterized protein (107 aa).

Residues 13–33 (VLIVTFLSSFIFIVWLPVALV) form a helical membrane-spanning segment.

Its subcellular location is the membrane. This is an uncharacterized protein from Saccharomyces cerevisiae (strain ATCC 204508 / S288c) (Baker's yeast).